Consider the following 350-residue polypeptide: Phosphotriesterase-related protein (350 aa).

Positions 22, 24, 169, 201, 230, and 298 each coordinate a divalent metal cation.

This sequence belongs to the metallo-dependent hydrolases superfamily. Phosphotriesterase family. A divalent metal cation is required as a cofactor.

This Drosophila pseudoobscura pseudoobscura (Fruit fly) protein is Phosphotriesterase-related protein.